The following is a 424-amino-acid chain: Histidine--tRNA ligase (424 aa).

This sequence belongs to the class-II aminoacyl-tRNA synthetase family. Homodimer.

It is found in the cytoplasm. The catalysed reaction is tRNA(His) + L-histidine + ATP = L-histidyl-tRNA(His) + AMP + diphosphate + H(+). The chain is Histidine--tRNA ligase from Bacillus velezensis (strain DSM 23117 / BGSC 10A6 / LMG 26770 / FZB42) (Bacillus amyloliquefaciens subsp. plantarum).